Reading from the N-terminus, the 146-residue chain is Large ribosomal subunit protein uL15x (146 aa).

Composition is skewed to basic residues over residues 1–14 and 21–30; these read MTTRFKKNRKKRGH and RIGKHRKHPG. The interval 1–35 is disordered; that stretch reads MTTRFKKNRKKRGHVSAGHGRIGKHRKHPGGRGNA.

The protein belongs to the universal ribosomal protein uL15 family.

The sequence is that of Large ribosomal subunit protein uL15x (RPL27AC) from Arabidopsis thaliana (Mouse-ear cress).